Consider the following 109-residue polypeptide: Spermidine export protein MdtI (109 aa).

A run of 4 helical transmembrane segments spans residues Phe-6 to Leu-26, Trp-36 to Val-56, Ala-64 to Phe-84, and Leu-88 to Leu-108.

It belongs to the drug/metabolite transporter (DMT) superfamily. Small multidrug resistance (SMR) (TC 2.A.7.1) family. MdtI subfamily. Forms a complex with MdtJ.

It localises to the cell inner membrane. Its function is as follows. Catalyzes the excretion of spermidine. The polypeptide is Spermidine export protein MdtI (Yersinia pseudotuberculosis serotype I (strain IP32953)).